A 432-amino-acid polypeptide reads, in one-letter code: Enolase (432 aa).

Gln163 provides a ligand contact to (2R)-2-phosphoglycerate. Glu205 acts as the Proton donor in catalysis. 3 residues coordinate Mg(2+): Asp241, Glu289, and Asp316. (2R)-2-phosphoglycerate is bound by residues Lys341, Arg370, Ser371, and Lys392. Residue Lys341 is the Proton acceptor of the active site.

It belongs to the enolase family. Requires Mg(2+) as cofactor.

The protein resides in the cytoplasm. The protein localises to the secreted. Its subcellular location is the cell surface. The enzyme catalyses (2R)-2-phosphoglycerate = phosphoenolpyruvate + H2O. It functions in the pathway carbohydrate degradation; glycolysis; pyruvate from D-glyceraldehyde 3-phosphate: step 4/5. Catalyzes the reversible conversion of 2-phosphoglycerate (2-PG) into phosphoenolpyruvate (PEP). It is essential for the degradation of carbohydrates via glycolysis. This chain is Enolase, found in Treponema pallidum (strain Nichols).